A 388-amino-acid chain; its full sequence is Dual-specificity RNA methyltransferase RlmN (388 aa).

Glu-109 acts as the Proton acceptor in catalysis. Residues 115–354 form the Radical SAM core domain; the sequence is EEDRATLCVS…TIVRKTRGDD (240 aa). Cys-122 and Cys-359 are joined by a disulfide. [4Fe-4S] cluster contacts are provided by Cys-129, Cys-133, and Cys-136. S-adenosyl-L-methionine-binding positions include 183–184, Ser-215, 237–239, and Asn-316; these read GE and SLH. Cys-359 serves as the catalytic S-methylcysteine intermediate.

This sequence belongs to the radical SAM superfamily. RlmN family. Requires [4Fe-4S] cluster as cofactor.

The protein localises to the cytoplasm. The enzyme catalyses adenosine(2503) in 23S rRNA + 2 reduced [2Fe-2S]-[ferredoxin] + 2 S-adenosyl-L-methionine = 2-methyladenosine(2503) in 23S rRNA + 5'-deoxyadenosine + L-methionine + 2 oxidized [2Fe-2S]-[ferredoxin] + S-adenosyl-L-homocysteine. It catalyses the reaction adenosine(37) in tRNA + 2 reduced [2Fe-2S]-[ferredoxin] + 2 S-adenosyl-L-methionine = 2-methyladenosine(37) in tRNA + 5'-deoxyadenosine + L-methionine + 2 oxidized [2Fe-2S]-[ferredoxin] + S-adenosyl-L-homocysteine. Its function is as follows. Specifically methylates position 2 of adenine 2503 in 23S rRNA and position 2 of adenine 37 in tRNAs. m2A2503 modification seems to play a crucial role in the proofreading step occurring at the peptidyl transferase center and thus would serve to optimize ribosomal fidelity. The sequence is that of Dual-specificity RNA methyltransferase RlmN from Klebsiella pneumoniae (strain 342).